A 262-amino-acid polypeptide reads, in one-letter code: TLC domain-containing protein 4-B (262 aa).

Transmembrane regions (helical) follow at residues 6 to 26, 53 to 73, 90 to 110, 122 to 142, 177 to 197, and 218 to 238; these read PLTV…FHVG, TVSS…LVYD, LNVA…IYYW, HLAA…PYFG, GVLM…IYYG, and AWII…IKIA. The 203-residue stretch at 44–246 folds into the TLC domain; the sequence is RQKIEWNSRT…IAKGCYKVLY (203 aa).

The protein belongs to the TLCD4 family.

The protein resides in the membrane. The protein is TLC domain-containing protein 4-B (tlcd4-b) of Xenopus laevis (African clawed frog).